The primary structure comprises 427 residues: Beta-1,3-galactosyl-O-glycosyl-glycoprotein beta-1,6-N-acetylglucosaminyltransferase (427 aa).

The Cytoplasmic segment spans residues 1-9; that stretch reads MLRKLWRRK. Residues 5–9 are mediates interaction with GOLPH3 and is necessary and sufficient for localization to the Golgi; that stretch reads LWRRK. Residues 10 to 32 form a helical; Signal-anchor for type II membrane protein membrane-spanning segment; the sequence is LFSFPTKYYFLFLAFSVVTFTVL. Residues 33 to 121 are stem region; sequence RIHQKTEFVN…EPLSKEEAGF (89 aa). The Lumenal portion of the chain corresponds to 33–427; that stretch reads RIHQKTEFVN…RHKALETLKP (395 aa). Residues Asn58 and Asn95 are each glycosylated (N-linked (GlcNAc...) asparagine). 4 disulfides stabilise this stretch: Cys59–Cys412, Cys100–Cys172, Cys151–Cys199, and Cys372–Cys380. The segment at 122–427 is catalytic; that stretch reads PIAYSIVVHH…RHKALETLKP (306 aa). UDP-N-acetyl-alpha-D-glucosamine is bound by residues 128–130, 155–157, and Tyr187; these read VVH and DAK. A glycoprotein-binding residues include Glu243, Lys251, Arg254, Glu320, Lys341, and Tyr358. The active-site Nucleophile is the Glu320. 2 residues coordinate UDP-N-acetyl-alpha-D-glucosamine: Arg377 and Lys400.

It belongs to the glycosyltransferase 14 family. In terms of assembly, interacts with GOLPH3; may control GCNT1 retention in the Golgi. As to expression, expressed in tracheal submucosal glands and epithelium (at protein level).

It localises to the golgi apparatus membrane. The catalysed reaction is a 3-O-[beta-D-galactosyl-(1-&gt;3)-N-acetyl-alpha-D-galactosaminyl]-L-seryl-[protein] + UDP-N-acetyl-alpha-D-glucosamine = 3-O-{beta-D-galactosyl-(1-&gt;3)-[N-acetyl-beta-D-glucosaminyl-(1-&gt;6)]-N-acetyl-alpha-D-galactosaminyl}-L-seryl-[protein] + UDP + H(+). The enzyme catalyses a 3-O-[beta-D-galactosyl-(1-&gt;3)-N-acetyl-alpha-D-galactosaminyl]-L-threonyl-[protein] + UDP-N-acetyl-alpha-D-glucosamine = a 3-O-{beta-D-galactosyl-(1-&gt;3)-[N-acetyl-beta-D-glucosaminyl-(1-&gt;6)]-N-acetyl-alpha-D-galactosaminyl}-L-threonyl-[protein] + UDP + H(+). It catalyses the reaction a globoside GalGb4Cer + UDP-N-acetyl-alpha-D-glucosamine = a globoside GlcNAc-(beta1-&gt;6)-GalGb4Cer + UDP + H(+). It carries out the reaction a ganglioside GA1 + UDP-N-acetyl-alpha-D-glucosamine = a ganglioside beta-D-GlcNAc-(1-&gt;6)-GA1 + UDP + H(+). Its pathway is protein modification; protein glycosylation. It participates in glycolipid biosynthesis. In terms of biological role, glycosyltransferase that catalyzes the transfer of an N-acetylglucosamine (GlcNAc) moiety in beta1-6 linkage from UDP-GlcNAc onto mucin-type core 1 O-glycan to form the branched mucin-type core 2 O-glycan. The catalysis is metal ion-independent and occurs with inversion of the anomeric configuration of sugar donor. Selectively involved in synthesis of mucin-type core 2 O-glycans that serve as scaffolds for the display of selectin ligand sialyl Lewis X epitope by myeloid cells, with an impact on homeostasis and recruitment to inflammatory sites. Can also act on glycolipid substrates. Transfers GlcNAc moiety to GalGb4Cer globosides in a reaction step to the synthesis of stage-specific embryonic antigen 1 (SSEA-1) determinant. Can use Galbeta1-3GalNAcalpha1- and Galbeta1-3GalNAcbeta1- oligosaccharide derivatives as acceptor substrates. This is Beta-1,3-galactosyl-O-glycosyl-glycoprotein beta-1,6-N-acetylglucosaminyltransferase (GCNT1) from Bos taurus (Bovine).